The following is a 25-amino-acid chain: TCLAHKQQAVNRLLYRIYSPIXXXF.

It belongs to the tyrosinase family. Hemocyanin subfamily. As to expression, hemolymph.

It localises to the secreted. It is found in the extracellular space. In terms of biological role, hemocyanins are copper-containing oxygen carriers occurring freely dissolved in the hemolymph of many mollusks and arthropods. The protein is Hemocyanin subunit 2 of Carcinus maenas (Common shore crab).